We begin with the raw amino-acid sequence, 830 residues long: Leucine--tRNA ligase (830 aa).

A 'HIGH' region motif is present at residues 34 to 44 (PYPSGNIHMGH). A 'KMSKS' region motif is present at residues 592–596 (KMSKS). Lys-595 contacts ATP.

Belongs to the class-I aminoacyl-tRNA synthetase family.

Its subcellular location is the cytoplasm. It carries out the reaction tRNA(Leu) + L-leucine + ATP = L-leucyl-tRNA(Leu) + AMP + diphosphate. This Ehrlichia ruminantium (strain Gardel) protein is Leucine--tRNA ligase.